A 129-amino-acid polypeptide reads, in one-letter code: UPF0325 protein ESA_03178 (129 aa).

It belongs to the UPF0325 family.

The sequence is that of UPF0325 protein ESA_03178 from Cronobacter sakazakii (strain ATCC BAA-894) (Enterobacter sakazakii).